The primary structure comprises 96 residues: Co-chaperonin GroES (96 aa).

It belongs to the GroES chaperonin family. In terms of assembly, heptamer of 7 subunits arranged in a ring. Interacts with the chaperonin GroEL.

It is found in the cytoplasm. Functionally, together with the chaperonin GroEL, plays an essential role in assisting protein folding. The GroEL-GroES system forms a nano-cage that allows encapsulation of the non-native substrate proteins and provides a physical environment optimized to promote and accelerate protein folding. GroES binds to the apical surface of the GroEL ring, thereby capping the opening of the GroEL channel. In Delftia acidovorans (strain DSM 14801 / SPH-1), this protein is Co-chaperonin GroES.